The chain runs to 291 residues: N-acetylmannosamine kinase (291 aa).

ATP contacts are provided by residues 5–12 (AIDIGGTK) and 132–139 (GVGGGVVC). Zn(2+) contacts are provided by histidine 156, cysteine 166, cysteine 168, and cysteine 173.

Belongs to the ROK (NagC/XylR) family. NanK subfamily. In terms of assembly, homodimer.

It catalyses the reaction an N-acyl-D-mannosamine + ATP = an N-acyl-D-mannosamine 6-phosphate + ADP + H(+). The protein operates within amino-sugar metabolism; N-acetylneuraminate degradation; D-fructose 6-phosphate from N-acetylneuraminate: step 2/5. Catalyzes the phosphorylation of N-acetylmannosamine (ManNAc) to ManNAc-6-P. This chain is N-acetylmannosamine kinase, found in Salmonella paratyphi A (strain ATCC 9150 / SARB42).